Consider the following 39-residue polypeptide: Phospholipase A2 (39 aa).

Residue histidine 36 is part of the active site.

It belongs to the phospholipase A2 family. Group III subfamily. Requires Ca(2+) as cofactor. Expressed by the venom gland.

It is found in the secreted. It carries out the reaction a 1,2-diacyl-sn-glycero-3-phosphocholine + H2O = a 1-acyl-sn-glycero-3-phosphocholine + a fatty acid + H(+). Its function is as follows. PLA2 catalyzes the calcium-dependent hydrolysis of the 2-acyl groups in 3-sn-phosphoglycerides. The polypeptide is Phospholipase A2 (Heloderma horridum horridum (Mexican beaded lizard)).